Consider the following 342-residue polypeptide: Ribosomal RNA small subunit methyltransferase C (342 aa).

Belongs to the methyltransferase superfamily. RsmC family. In terms of assembly, monomer.

It is found in the cytoplasm. It catalyses the reaction guanosine(1207) in 16S rRNA + S-adenosyl-L-methionine = N(2)-methylguanosine(1207) in 16S rRNA + S-adenosyl-L-homocysteine + H(+). In terms of biological role, specifically methylates the guanine in position 1207 of 16S rRNA in the 30S particle. This Salmonella paratyphi B (strain ATCC BAA-1250 / SPB7) protein is Ribosomal RNA small subunit methyltransferase C.